The primary structure comprises 594 residues: Keratin, type II cytoskeletal 2 oral (594 aa).

The segment at 1-164 (MSRQACKKSF…DPQIGQVKAQ (164 aa)) is head. Omega-N-methylarginine occurs at positions 85 and 104. The coil 1A stretch occupies residues 165–200 (EREQIKTLNNKFASFIDKVRFLEQQNKVLETKWELL). Residues 165–480 (EREQIKTLNN…KLLEGEECRL (316 aa)) enclose the IF rod domain. The segment at 201-221 (QQQTIRSGSGPQNLEPFFESY) is linker 1. The tract at residues 222–313 (ISCLRKQLDS…TLYDMELSQI (92 aa)) is coil 1B. The interval 314 to 337 (QSHVSDTSVVLSMDNNRCLDLDSI) is linker 12. The coil 2 stretch occupies residues 338–476 (IAEVKAQYED…ATYRKLLEGE (139 aa)). The tract at residues 477–594 (ECRLSGEFQN…TTSSSQQRSK (118 aa)) is tail. The segment at 497–594 (TSTSSSGSFR…TTSSSQQRSK (98 aa)) is disordered. Residues 506–522 (RGTGGSNYGGDSSGRSG) show a composition bias toward gly residues. Over residues 523 to 551 (GSSSSSSRGSSSRGSSGSRLGSGGSISVS) the composition is skewed to low complexity. R541 is subject to Omega-N-methylarginine. Positions 552-564 (QQRMGFNSGGSQT) are enriched in polar residues. A compositionally biased stretch (low complexity) spans 565 to 594 (SVGSSYKSGRGGSSSVQFSQTTSSSQQRSK).

This sequence belongs to the intermediate filament family. In terms of assembly, heterotetramer of two type I and two type II keratins.

Its function is as follows. Probably contributes to terminal cornification. The chain is Keratin, type II cytoskeletal 2 oral from Mus musculus (Mouse).